A 336-amino-acid polypeptide reads, in one-letter code: Urokinase plasminogen activator surface receptor (336 aa).

The signal sequence occupies residues 1-23 (MGHPLLLPLLLLLLHTGVPASWG). UPAR/Ly6 domains lie at 24 to 111 (LRCM…VTFP), 116 to 208 (LECI…LSLA), and 215 to 302 (HRCY…EDIQ). Intrachain disulfides connect Cys26–Cys47, Cys29–Cys35, and Cys40–Cys68. Residue Asn75 is glycosylated (N-linked (GlcNAc...) asparagine). Disulfide bonds link Cys94/Cys99, Cys118/Cys145, Cys121/Cys128, Cys138/Cys170, Cys176/Cys193, Cys194/Cys199, Cys217/Cys245, Cys220/Cys228, Cys238/Cys264, Cys270/Cys288, and Cys289/Cys294. Asn195 and Asn223 each carry an N-linked (GlcNAc...) asparagine glycan.

Monomer. Interacts (via the UPAR/Ly6 domains) with SRPX2. Interacts with MRC2. Interacts with FAP (seprase); the interaction occurs at the cell surface of invadopodia membrane. Interacts with SORL1 (via N-terminal ectodomain); this interaction decreases PLAUR internalization. The ternary complex composed of PLAUR-PLAU-SERPINE1 also interacts with SORL1.

Its subcellular location is the cell membrane. The protein resides in the cell projection. It localises to the invadopodium membrane. Acts as a receptor for urokinase plasminogen activator. Plays a role in localizing and promoting plasmin formation. Mediates the proteolysis-independent signal transduction activation effects of U-PA. It is subject to negative-feedback regulation by U-PA which cleaves it into an inactive form. The sequence is that of Urokinase plasminogen activator surface receptor (PLAUR) from Aotus trivirgatus (Three-striped night monkey).